A 70-amino-acid chain; its full sequence is MQVLVRDNNVDQALRALKKKMQREGIFREMKMRDYYEKPSQKRAREKAEAVRRVRKLARKRAQREGLVAR.

The protein belongs to the bacterial ribosomal protein bS21 family.

This Rhizobium etli (strain ATCC 51251 / DSM 11541 / JCM 21823 / NBRC 15573 / CFN 42) protein is Small ribosomal subunit protein bS21B.